The primary structure comprises 180 residues: GTP cyclohydrolase 1 (180 aa).

Residues Cys-71, His-74, and Cys-142 each coordinate Zn(2+).

Belongs to the GTP cyclohydrolase I family. As to quaternary structure, homomer.

The enzyme catalyses GTP + H2O = 7,8-dihydroneopterin 3'-triphosphate + formate + H(+). Its pathway is cofactor biosynthesis; 7,8-dihydroneopterin triphosphate biosynthesis; 7,8-dihydroneopterin triphosphate from GTP: step 1/1. This is GTP cyclohydrolase 1 from Helicobacter pylori (strain Shi470).